Consider the following 88-residue polypeptide: Large ribosomal subunit protein bL27 (88 aa).

The segment at 1–21 (MAHKKGASSSRNGRDSAAQRL) is disordered.

The protein belongs to the bacterial ribosomal protein bL27 family.

The chain is Large ribosomal subunit protein bL27 from Mycobacterium sp. (strain MCS).